The chain runs to 322 residues: tRNA U34 carboxymethyltransferase (322 aa).

Residues Lys-91, Trp-105, Lys-110, Gly-129, 179–180 (LE), Met-195, Tyr-199, and Arg-314 contribute to the carboxy-S-adenosyl-L-methionine site.

Belongs to the class I-like SAM-binding methyltransferase superfamily. CmoB family. Homotetramer.

The catalysed reaction is carboxy-S-adenosyl-L-methionine + 5-hydroxyuridine(34) in tRNA = 5-carboxymethoxyuridine(34) in tRNA + S-adenosyl-L-homocysteine + H(+). Functionally, catalyzes carboxymethyl transfer from carboxy-S-adenosyl-L-methionine (Cx-SAM) to 5-hydroxyuridine (ho5U) to form 5-carboxymethoxyuridine (cmo5U) at position 34 in tRNAs. This is tRNA U34 carboxymethyltransferase from Pseudomonas aeruginosa (strain LESB58).